Here is a 372-residue protein sequence, read N- to C-terminus: 4-hydroxy-3-methylbut-2-en-1-yl diphosphate synthase (flavodoxin) (372 aa).

Residues Cys270, Cys273, Cys305, and Glu312 each coordinate [4Fe-4S] cluster.

It belongs to the IspG family. The cofactor is [4Fe-4S] cluster.

The catalysed reaction is (2E)-4-hydroxy-3-methylbut-2-enyl diphosphate + oxidized [flavodoxin] + H2O + 2 H(+) = 2-C-methyl-D-erythritol 2,4-cyclic diphosphate + reduced [flavodoxin]. It participates in isoprenoid biosynthesis; isopentenyl diphosphate biosynthesis via DXP pathway; isopentenyl diphosphate from 1-deoxy-D-xylulose 5-phosphate: step 5/6. In terms of biological role, converts 2C-methyl-D-erythritol 2,4-cyclodiphosphate (ME-2,4cPP) into 1-hydroxy-2-methyl-2-(E)-butenyl 4-diphosphate. The sequence is that of 4-hydroxy-3-methylbut-2-en-1-yl diphosphate synthase (flavodoxin) from Escherichia coli O9:H4 (strain HS).